The primary structure comprises 677 residues: Methionine--tRNA ligase (677 aa).

Positions proline 15–histidine 25 match the 'HIGH' region motif. Residues cysteine 146, cysteine 149, cysteine 159, and cysteine 162 each coordinate Zn(2+). The short motif at lysine 333–serine 337 is the 'KMSKS' region element. ATP is bound at residue lysine 336. In terms of domain architecture, tRNA-binding spans aspartate 575 to lysine 677.

The protein belongs to the class-I aminoacyl-tRNA synthetase family. MetG type 1 subfamily. In terms of assembly, homodimer. Zn(2+) serves as cofactor.

The protein resides in the cytoplasm. The enzyme catalyses tRNA(Met) + L-methionine + ATP = L-methionyl-tRNA(Met) + AMP + diphosphate. Its function is as follows. Is required not only for elongation of protein synthesis but also for the initiation of all mRNA translation through initiator tRNA(fMet) aminoacylation. The polypeptide is Methionine--tRNA ligase (Cronobacter sakazakii (strain ATCC BAA-894) (Enterobacter sakazakii)).